A 535-amino-acid chain; its full sequence is Dimethylaniline monooxygenase [N-oxide-forming] 2 (535 aa).

At Ala-2 the chain carries N-acetylalanine. FAD is bound by residues 9 to 13, Glu-32, 40 to 41, and 61 to 62; these read GAGVS, LW, and NT. Residues 60–61 and 195–198 contribute to the NADP(+) site; these read TN and SASD. Residue Lys-492 forms a Glycyl lysine isopeptide (Lys-Gly) (interchain with G-Cter in SUMO) linkage. The helical transmembrane segment at 510–530 threads the bilayer; it reads FPVSFLLKFLGLFALVLAFLF.

Belongs to the FMO family. Requires FAD as cofactor. The cofactor is Mg(2+). In terms of tissue distribution, lung.

The protein resides in the microsome membrane. The protein localises to the endoplasmic reticulum membrane. It catalyses the reaction N,N-dimethylaniline + NADPH + O2 + H(+) = N,N-dimethylaniline N-oxide + NADP(+) + H2O. Catalyzes the oxidative metabolism of numerous xenobiotics, including mainly therapeutic drugs and insecticides that contain a soft nucleophile, most commonly nitrogen and sulfur and participates to their bioactivation. Most drug substrates are tertiary amines such as prochlorperazine and trifluoperazine which are N-oxygenated to form the N-oxide, or sulfides such as thiourea and ethionamide, which are S-oxygenated to the sulfoxide. Others include primary alkylamines such as N-dodecylamine and octan-1-amine that are sequentially monooxygenated to oximes through intermediate hydroxylamines and both steps are NADPH- and oxygen-dependent. Also metabolized N-Deacetyl ketoconazole (DAK) to N-hydroxy-DAK and appears to further metabolizes N-hydroxy-DAK to two others metabolites. Also catalyzes S-oxygenation of the thioether-containing organophosphate insecticides, phorate and disulfoton. This chain is Dimethylaniline monooxygenase [N-oxide-forming] 2, found in Oryctolagus cuniculus (Rabbit).